We begin with the raw amino-acid sequence, 418 residues long: MEIKEQVVFQARKASKASRKLSGIATDVKNKALAAIAEKLVQAKDEIIRANNIDMERGREKGLSKALLDRLELNEKRIEGMAEGLKELVKLEDPVGEVIKMWKRPNGLQIGQMRVPLGVIGMIYEARPNVTVDAAGLCLKTGNAVILRGGSEAINSNKILARIIEDTAVAAGLPEGCVQLIQTTDRKAVKVLFNLTEYLDVLIPRGGAGLINRVIAEAKVPVIQTGVGNCHVYVDSEADLDMALDIVFNAKTSRPAVCNAAESLLVHRQVADEFLPELYKLFRENNVELRGCENTRAILPGIKKAVDDDWSREYLDYIMAVKIVDSFDKAVEHINTYGTKHSEAIITENYTRAHRFLQEIDAAAVYVNASTRFTDGGQFGLGAEIGISTQKLHARGPMGLEELTTTKYIIFGQGQIRE.

The protein belongs to the gamma-glutamyl phosphate reductase family.

It localises to the cytoplasm. The catalysed reaction is L-glutamate 5-semialdehyde + phosphate + NADP(+) = L-glutamyl 5-phosphate + NADPH + H(+). It functions in the pathway amino-acid biosynthesis; L-proline biosynthesis; L-glutamate 5-semialdehyde from L-glutamate: step 2/2. Functionally, catalyzes the NADPH-dependent reduction of L-glutamate 5-phosphate into L-glutamate 5-semialdehyde and phosphate. The product spontaneously undergoes cyclization to form 1-pyrroline-5-carboxylate. In Halothermothrix orenii (strain H 168 / OCM 544 / DSM 9562), this protein is Gamma-glutamyl phosphate reductase.